The following is a 244-amino-acid chain: Uridylate kinase (244 aa).

An ATP-binding site is contributed by 11–14 (KLSG). The interval 19–24 (GSLGYG) is involved in allosteric activation by GTP. UMP is bound at residue G53. ATP contacts are provided by G54 and R58. UMP-binding positions include D73 and 134–141 (SGNPFFTT). T161, Y167, and D170 together coordinate ATP.

Belongs to the UMP kinase family. Homohexamer.

The protein resides in the cytoplasm. The catalysed reaction is UMP + ATP = UDP + ADP. It participates in pyrimidine metabolism; CTP biosynthesis via de novo pathway; UDP from UMP (UMPK route): step 1/1. Allosterically activated by GTP. Inhibited by UTP. Its function is as follows. Catalyzes the reversible phosphorylation of UMP to UDP. The sequence is that of Uridylate kinase from Trichodesmium erythraeum (strain IMS101).